The primary structure comprises 102 residues: NADH-quinone oxidoreductase subunit K (102 aa).

3 helical membrane-spanning segments follow: residues 6-26, 30-50, and 62-82; these read LEHGLAVAGVLFCLGLVGLMV, ILFVLMSLEIMMNAAALAFVV, and VMFILVISLAAAEASIGLAIL.

It belongs to the complex I subunit 4L family. As to quaternary structure, NDH-1 is composed of 13 different subunits. Subunits NuoA, H, J, K, L, M, N constitute the membrane sector of the complex.

Its subcellular location is the cell inner membrane. The enzyme catalyses a quinone + NADH + 5 H(+)(in) = a quinol + NAD(+) + 4 H(+)(out). Its function is as follows. NDH-1 shuttles electrons from NADH, via FMN and iron-sulfur (Fe-S) centers, to quinones in the respiratory chain. The immediate electron acceptor for the enzyme in this species is believed to be ubiquinone. Couples the redox reaction to proton translocation (for every two electrons transferred, four hydrogen ions are translocated across the cytoplasmic membrane), and thus conserves the redox energy in a proton gradient. In Pseudomonas syringae pv. tomato (strain ATCC BAA-871 / DC3000), this protein is NADH-quinone oxidoreductase subunit K.